A 289-amino-acid polypeptide reads, in one-letter code: Acetyl-coenzyme A carboxylase carboxyl transferase subunit beta (289 aa).

Residues 28–289 (VMTKCPKCKK…QGGEMAVWQS (262 aa)) enclose the CoA carboxyltransferase N-terminal domain. Residues Cys32, Cys35, Cys51, and Cys54 each contribute to the Zn(2+) site. Residues 32-54 (CPKCKKIMYTKEVLKNLKVCVNC) form a C4-type zinc finger.

It belongs to the AccD/PCCB family. As to quaternary structure, acetyl-CoA carboxylase is a heterohexamer composed of biotin carboxyl carrier protein (AccB), biotin carboxylase (AccC) and two subunits each of ACCase subunit alpha (AccA) and ACCase subunit beta (AccD). It depends on Zn(2+) as a cofactor.

Its subcellular location is the cytoplasm. The catalysed reaction is N(6)-carboxybiotinyl-L-lysyl-[protein] + acetyl-CoA = N(6)-biotinyl-L-lysyl-[protein] + malonyl-CoA. The protein operates within lipid metabolism; malonyl-CoA biosynthesis; malonyl-CoA from acetyl-CoA: step 1/1. Functionally, component of the acetyl coenzyme A carboxylase (ACC) complex. Biotin carboxylase (BC) catalyzes the carboxylation of biotin on its carrier protein (BCCP) and then the CO(2) group is transferred by the transcarboxylase to acetyl-CoA to form malonyl-CoA. The chain is Acetyl-coenzyme A carboxylase carboxyl transferase subunit beta from Bacillus thuringiensis (strain Al Hakam).